A 214-amino-acid polypeptide reads, in one-letter code: Adenylate kinase (214 aa).

10–15 (GAGKGT) provides a ligand contact to ATP. The interval 30–59 (STGDMLRAAVKAGSELGLKAKEIMDAGKLV) is NMP. AMP is bound by residues Thr31, Arg36, 57 to 59 (KLV), 85 to 88 (GFPR), and Gln92. Positions 122–159 (GRRVHAASGRVYHVKFNPPKVEDKDDVTGEELTIRKDD) are LID. ATP is bound by residues Arg123 and 132 to 133 (VY). AMP contacts are provided by Arg156 and Arg167. Arg200 contributes to the ATP binding site.

This sequence belongs to the adenylate kinase family. As to quaternary structure, monomer.

Its subcellular location is the cytoplasm. It catalyses the reaction AMP + ATP = 2 ADP. It participates in purine metabolism; AMP biosynthesis via salvage pathway; AMP from ADP: step 1/1. Its function is as follows. Catalyzes the reversible transfer of the terminal phosphate group between ATP and AMP. Plays an important role in cellular energy homeostasis and in adenine nucleotide metabolism. In Yersinia pseudotuberculosis serotype O:1b (strain IP 31758), this protein is Adenylate kinase.